The following is a 362-amino-acid chain: DNA replication and repair protein RecF (362 aa).

Glycine 30–threonine 37 is an ATP binding site.

Belongs to the RecF family.

The protein localises to the cytoplasm. Functionally, the RecF protein is involved in DNA metabolism; it is required for DNA replication and normal SOS inducibility. RecF binds preferentially to single-stranded, linear DNA. It also seems to bind ATP. The polypeptide is DNA replication and repair protein RecF (Xanthomonas oryzae pv. oryzae (strain MAFF 311018)).